The sequence spans 104 residues: Phosphoribosyl-ATP pyrophosphatase (104 aa).

It belongs to the PRA-PH family.

The protein localises to the cytoplasm. It catalyses the reaction 1-(5-phospho-beta-D-ribosyl)-ATP + H2O = 1-(5-phospho-beta-D-ribosyl)-5'-AMP + diphosphate + H(+). Its pathway is amino-acid biosynthesis; L-histidine biosynthesis; L-histidine from 5-phospho-alpha-D-ribose 1-diphosphate: step 2/9. This chain is Phosphoribosyl-ATP pyrophosphatase, found in Methanosarcina barkeri (strain Fusaro / DSM 804).